The chain runs to 377 residues: Lipoyl synthase, mitochondrial (377 aa).

A mitochondrion-targeting transit peptide spans 1–77 (MFRRGGRILN…LPNGSVHKRL (77 aa)). Residues C107, C112, C118, C138, C142, C145, and S353 each coordinate [4Fe-4S] cluster. A Radical SAM core domain is found at 123–342 (DKTRATATIM…RKRAEELGFL (220 aa)).

This sequence belongs to the radical SAM superfamily. Lipoyl synthase family. It depends on [4Fe-4S] cluster as a cofactor.

Its subcellular location is the mitochondrion. The catalysed reaction is [[Fe-S] cluster scaffold protein carrying a second [4Fe-4S](2+) cluster] + N(6)-octanoyl-L-lysyl-[protein] + 2 oxidized [2Fe-2S]-[ferredoxin] + 2 S-adenosyl-L-methionine + 4 H(+) = [[Fe-S] cluster scaffold protein] + N(6)-[(R)-dihydrolipoyl]-L-lysyl-[protein] + 4 Fe(3+) + 2 hydrogen sulfide + 2 5'-deoxyadenosine + 2 L-methionine + 2 reduced [2Fe-2S]-[ferredoxin]. Its pathway is protein modification; protein lipoylation via endogenous pathway; protein N(6)-(lipoyl)lysine from octanoyl-[acyl-carrier-protein]: step 2/2. In terms of biological role, catalyzes the radical-mediated insertion of two sulfur atoms into the C-6 and C-8 positions of the octanoyl moiety bound to the lipoyl domains of lipoate-dependent enzymes, thereby converting the octanoylated domains into lipoylated derivatives. This chain is Lipoyl synthase, mitochondrial, found in Schizosaccharomyces japonicus (strain yFS275 / FY16936) (Fission yeast).